A 200-amino-acid chain; its full sequence is ADP-ribosylation factor-like protein 4A (200 aa).

Residue Gly2 is the site of N-myristoyl glycine attachment. Residues 27–34 (GLDCAGKT), 75–79 (DVGGQ), and 134–137 (NKQD) each bind GTP.

It belongs to the small GTPase superfamily. Arf family. In terms of assembly, interacts with CYTH2. Interacts with KPNA2; the interaction is direct. Does not interact with ARL4A. In terms of processing, myristoylated.

It localises to the cell membrane. The protein resides in the cytoplasm. The protein localises to the nucleus. It is found in the nucleolus. Functionally, small GTP-binding protein which cycles between an inactive GDP-bound and an active GTP-bound form, and the rate of cycling is regulated by guanine nucleotide exchange factors (GEF) and GTPase-activating proteins (GAP). GTP-binding protein that does not act as an allosteric activator of the cholera toxin catalytic subunit. Recruits CYTH1, CYTH2, CYTH3 and CYTH4 to the plasma membrane in GDP-bound form. This Homo sapiens (Human) protein is ADP-ribosylation factor-like protein 4A (ARL4A).